Here is a 156-residue protein sequence, read N- to C-terminus: Small ribosomal subunit protein uS7 (156 aa).

Belongs to the universal ribosomal protein uS7 family. In terms of assembly, part of the 30S ribosomal subunit. Contacts proteins S9 and S11.

One of the primary rRNA binding proteins, it binds directly to 16S rRNA where it nucleates assembly of the head domain of the 30S subunit. Is located at the subunit interface close to the decoding center, probably blocks exit of the E-site tRNA. The chain is Small ribosomal subunit protein uS7 from Micrococcus luteus (strain ATCC 4698 / DSM 20030 / JCM 1464 / CCM 169 / CCUG 5858 / IAM 1056 / NBRC 3333 / NCIMB 9278 / NCTC 2665 / VKM Ac-2230) (Micrococcus lysodeikticus).